We begin with the raw amino-acid sequence, 771 residues long: Ribonucleoside-diphosphate reductase large subunit (771 aa).

Residues 1-92 (MFVIKRNGYK…ISNLHKETKK (92 aa)) enclose the ATP-cone domain. Residues 5-6 (KR), 11-17 (ENVMFDK), Thr53, Asp57, and Lys88 each bind ATP. Positions 202 and 217 each coordinate GDP. DTTP contacts are provided by residues 226-228 (DSI), Lys243, and Arg256. Position 427 (Asn427) interacts with GDP. Asn427 functions as the Proton acceptor in the catalytic mechanism. Residue Cys429 is the Cysteine radical intermediate of the active site. Residues Glu431 and 603 to 606 (TAST) each bind GDP. Glu431 (proton acceptor) is an active-site residue.

Belongs to the ribonucleoside diphosphate reductase large chain family. In terms of assembly, interacts with RNR2/OPG047 subunit. Mg(2+) serves as cofactor.

The catalysed reaction is a 2'-deoxyribonucleoside 5'-diphosphate + [thioredoxin]-disulfide + H2O = a ribonucleoside 5'-diphosphate + [thioredoxin]-dithiol. Functionally, ribonucleoside-diphosphate reductase holoenzyme provides the precursors necessary for viral DNA synthesis. Allows virus growth in non-dividing cells. Catalyzes the biosynthesis of deoxyribonucleotides from the corresponding ribonucleotides. The sequence is that of Ribonucleoside-diphosphate reductase large subunit (OPG080) from Monkeypox virus.